The following is a 345-amino-acid chain: MKNDLFLRVLRGEKVERTPVWIMRQAGRYLAEYRKLRAKVPHFLDVCRNPELACELALQPLQRFPLDAAILFSDILTIPDAMGLGLSFVAGEGPQFAKPLRSSAAIESLTLPPSGSLDYVFAAVSATKRALNDRVPLIGFAGSPWTLAAYMIEGGASKDFAFAKSFAFSQPQAMDVLLTQLTCAITDYLRGQIKAGAQAVMIFDSWGGVLPYWAYEQFSLPYLKKIVAAVHTVAPVIVFTKGGGLWLAAQKTIGAAALGVDWTVSLAAARKIVGESIVLQGNLDPTFLMTDPKTIRQAVAKTLADYGNGHRYIFNLGHGITPNASPDNVAAMIEAVHELSPQYHQ.

Substrate is bound by residues 24–28, aspartate 74, tyrosine 150, serine 205, and histidine 318; that span reads RQAGR.

It belongs to the uroporphyrinogen decarboxylase family. Homodimer.

The protein localises to the cytoplasm. It carries out the reaction uroporphyrinogen III + 4 H(+) = coproporphyrinogen III + 4 CO2. The protein operates within porphyrin-containing compound metabolism; protoporphyrin-IX biosynthesis; coproporphyrinogen-III from 5-aminolevulinate: step 4/4. Functionally, catalyzes the decarboxylation of four acetate groups of uroporphyrinogen-III to yield coproporphyrinogen-III. The protein is Uroporphyrinogen decarboxylase of Dichelobacter nodosus (strain VCS1703A).